Consider the following 72-residue polypeptide: Protein RALF-like 11 (72 aa).

The signal sequence occupies residues 1–17; the sequence is MKAWLICLLVICAAVIA. Intrachain disulfides connect cysteine 34–cysteine 43 and cysteine 63–cysteine 69.

Belongs to the plant rapid alkalinization factor (RALF) family.

It is found in the secreted. Its function is as follows. Cell signaling peptide that may regulate plant stress, growth, and development. Mediates a rapid alkalinization of extracellular space by mediating a transient increase in the cytoplasmic Ca(2+) concentration leading to a calcium-dependent signaling events through a cell surface receptor and a concomitant activation of some intracellular mitogen-activated protein kinases. The polypeptide is Protein RALF-like 11 (RALFL11) (Arabidopsis thaliana (Mouse-ear cress)).